Consider the following 417-residue polypeptide: Lipoyl synthase, mitochondrial (417 aa).

Residues 1–30 constitute a mitochondrion transit peptide; that stretch reads MATSIPRSRCFLTSSTLKVVPRSRTPLRSF. The tract at residues 23-62 is disordered; the sequence is SRTPLRSFATTSDTPQTSVPEAPGKRSRPPTSFSDTLNAG. 2 stretches are compositionally biased toward polar residues: residues 30–41 and 51–61; these read FATTSDTPQTSV and PPTSFSDTLNA. [4Fe-4S] cluster is bound by residues cysteine 132, cysteine 137, cysteine 143, cysteine 163, cysteine 167, cysteine 170, and serine 378. A Radical SAM core domain is found at 146–367; that stretch reads GSSKSAATAT…RQRALDMGFL (222 aa).

The protein belongs to the radical SAM superfamily. Lipoyl synthase family. [4Fe-4S] cluster is required as a cofactor.

Its subcellular location is the mitochondrion. It catalyses the reaction [[Fe-S] cluster scaffold protein carrying a second [4Fe-4S](2+) cluster] + N(6)-octanoyl-L-lysyl-[protein] + 2 oxidized [2Fe-2S]-[ferredoxin] + 2 S-adenosyl-L-methionine + 4 H(+) = [[Fe-S] cluster scaffold protein] + N(6)-[(R)-dihydrolipoyl]-L-lysyl-[protein] + 4 Fe(3+) + 2 hydrogen sulfide + 2 5'-deoxyadenosine + 2 L-methionine + 2 reduced [2Fe-2S]-[ferredoxin]. It functions in the pathway protein modification; protein lipoylation via endogenous pathway; protein N(6)-(lipoyl)lysine from octanoyl-[acyl-carrier-protein]: step 2/2. Its function is as follows. Catalyzes the radical-mediated insertion of two sulfur atoms into the C-6 and C-8 positions of the octanoyl moiety bound to the lipoyl domains of lipoate-dependent enzymes, thereby converting the octanoylated domains into lipoylated derivatives. This is Lipoyl synthase, mitochondrial from Pyrenophora tritici-repentis (strain Pt-1C-BFP) (Wheat tan spot fungus).